Here is a 785-residue protein sequence, read N- to C-terminus: MAAPVSEPTVARQKLLALLGQVQTYVFQIELLRRCDPHIGRGKLPQLKLNALQVRALRRRLRPGLEAQAGAFLTPLSVTLELLLEYAWREGERLLGSLETFATAGDVAAFFTETMGLARPCPYHQRVRLDTYGGTVHMELCFLHDVENFLKQLNYCHLITPSRGATAALERVREFMVGAVGSGLIVPPELSDPSHPCAVCFEELCVTANQGATIARRLADRICNHVTQQAQVRLDANELRRYLPHAAGLSDADRARALSVLDHALARTAGGDGQPHPSPENDSVRKEADALLEAHDVFQATTPGLYAISELRFWLASGDRAGQTTMDAFASNLTALARRELQQETAAVAVELALFGRRAEHFDRAFGSHLAALDMVDALIIGGQATSPDDQIEALIRACYDHHLTTPLLRRLVSPEQCDEEALRRVLARMGAGGAADAPKGGAGPDDDGDRVAVEEGTRGLGAPGGGGEDEDRRRGPGGQGPETWGDIATQAAADVRERRRLYADRLTKRSLASLGRCVREQRGELEKMLRVSVHGEVLPATFAAVANGFAARARFCALTAGAGTVIDNRSAPGVFDAHRFMRASLLRHQVDPALLPSITHRFFELVNGPLFDHSTHSFAQPPNTALYYSVENVGLLPHLKEELARFIMGAGGSGADWAVSEFQRFYCFDGISGITPTQRAAWRYIRELIIATTLFASVYRCGELELRRPDCSRPTSEGRYRYPPGVYLTYDSDCPLVAIVESAPDGCIGPRSVVVYDRDVFSILYSVLQHLAPRLPDGGHDGPP.

The C3H1-type zinc finger occupies 197 to 225 (CAVCFEELCVTANQGATIARRLADRICNH). Residues 433–489 (GGAADAPKGGAGPDDDGDRVAVEEGTRGLGAPGGGGEDEDRRRGPGGQGPETWGDIA) form a disordered region. ATP is bound at residue 696–703 (FASVYRCG).

It belongs to the herpesviridae TRM1 protein family. As to quaternary structure, associates with TRM2 and TRM3 to form the tripartite terminase complex. Interacts with portal protein.

It localises to the host nucleus. Component of the molecular motor that translocates viral genomic DNA in empty capsid during DNA packaging. Forms a tripartite terminase complex together with TRM2 and TRM3 in the host cytoplasm. Once the complex reaches the host nucleus, it interacts with the capsid portal vertex. This portal forms a ring in which genomic DNA is translocated into the capsid. TRM1 carries an endonuclease activity that plays an important role for the cleavage of concatemeric viral DNA into unit length genomes. This chain is Tripartite terminase subunit 1, found in Human herpesvirus 1 (strain Angelotti) (HHV-1).